We begin with the raw amino-acid sequence, 265 residues long: Lipopolysaccharide core heptose(I) kinase WaaP (265 aa).

Residue D162 is part of the active site.

It belongs to the protein kinase superfamily. KdkA/RfaP family. Mg(2+) serves as cofactor.

It catalyses the reaction an L-alpha-D-Hep-(1-&gt;3)-L-alpha-D-Hep-(1-&gt;5)-[alpha-Kdo-(2-&gt;4)]-alpha-Kdo-(2-&gt;6)-lipid A + ATP = an L-alpha-D-Hep-(1-&gt;3)-4-O-phospho-L-alpha-D-Hep-(1-&gt;5)-[alpha-Kdo-(2-&gt;4)]-alpha-Kdo-(2-&gt;6)-lipid A + ADP + H(+). The catalysed reaction is L-alpha-D-Hep-(1-&gt;3)-L-alpha-D-Hep-(1-&gt;5)-[alpha-Kdo-(2-&gt;4)]-alpha-Kdo-(2-&gt;6)-lipid A (E. coli) + ATP = L-alpha-D-Hep-(1-&gt;3)-4-O-phospho-L-alpha-D-Hep-(1-&gt;5)-[alpha-Kdo-(2-&gt;4)]-alpha-Kdo-(2-&gt;6)-lipid A (E. coli) + ADP + H(+). Its pathway is bacterial outer membrane biogenesis; LPS core biosynthesis. Its function is as follows. Kinase involved in the biosynthesis of the core oligosaccharide region of lipopolysaccharide (LPS). Catalyzes the phosphorylation of heptose I (HepI), the first heptose added to the Kdo2-lipid A module. This Escherichia coli (strain K12) protein is Lipopolysaccharide core heptose(I) kinase WaaP.